The following is a 309-amino-acid chain: E3 ubiquitin-protein ligase SINAT5 (309 aa).

The RING-type zinc finger occupies 46–82 (CPVCTNSMYPPIHQCHNGHTLCSTCKSRVHNRCPTCR). The segment at 96–289 (VAESLELPCK…KELKLRVTGR (194 aa)) is SBD. Residues 99–159 (SLELPCKYYN…LVAHLRDDHK (61 aa)) form an SIAH-type zinc finger. Zn(2+) is bound by residues cysteine 104, cysteine 111, histidine 123, cysteine 127, cysteine 134, cysteine 141, histidine 153, and histidine 158.

This sequence belongs to the SINA (Seven in absentia) family. In terms of assembly, homodimer; homodimerization is essential for its function. Interacts with UBC28 and NAC021/NAC022. Interacts with SINAT6. Interacts with ATG6 and TRAF1A. Interacts with WAV3. Interacts with FREE1. In terms of tissue distribution, expressed at low level in the vascular tissue of mature roots. Expressed in lateral roots and in elongation zone of the main root upon stimulation by auxin. Colocalizes with NAC021/NAC022.

The protein localises to the nucleus. Its subcellular location is the cytoplasm. It catalyses the reaction S-ubiquitinyl-[E2 ubiquitin-conjugating enzyme]-L-cysteine + [acceptor protein]-L-lysine = [E2 ubiquitin-conjugating enzyme]-L-cysteine + N(6)-ubiquitinyl-[acceptor protein]-L-lysine.. It functions in the pathway protein modification; protein ubiquitination. Its function is as follows. E3 ubiquitin-protein ligase that mediates ubiquitination and subsequent proteasomal degradation of target proteins. E3 ubiquitin ligases accept ubiquitin from an E2 ubiquitin-conjugating enzyme in the form of a thioester and then directly transfers the ubiquitin to targeted substrates. Mediates the ubiquitination and proteasomal-dependent degradation of NAC021/NAC022, a transcription activator that functions downstream of the auxin signals, thereby acting as a down-regulator of auxin signals. Involved in the formation of lateral roots. Is antagonist to SINAT1, SINAT2, SINAT3 and SINAT4 by suppressing FREE1 ubiquitination and degradation mediated by SINAT1, SINAT2, SINAT3 and SINAT4, and promoting FREE1 accumulation. This Arabidopsis thaliana (Mouse-ear cress) protein is E3 ubiquitin-protein ligase SINAT5.